The chain runs to 960 residues: Isoleucine--tRNA ligase (960 aa).

A 'HIGH' region motif is present at residues 60–70 (PYANGSLHIGH). L-isoleucyl-5'-AMP is bound at residue E573. A 'KMSKS' region motif is present at residues 614-618 (KMSKS). K617 provides a ligand contact to ATP. The Zn(2+) site is built by C929, C932, C949, and C952.

The protein belongs to the class-I aminoacyl-tRNA synthetase family. IleS type 1 subfamily. In terms of assembly, monomer. Requires Zn(2+) as cofactor.

Its subcellular location is the cytoplasm. The enzyme catalyses tRNA(Ile) + L-isoleucine + ATP = L-isoleucyl-tRNA(Ile) + AMP + diphosphate. Functionally, catalyzes the attachment of isoleucine to tRNA(Ile). As IleRS can inadvertently accommodate and process structurally similar amino acids such as valine, to avoid such errors it has two additional distinct tRNA(Ile)-dependent editing activities. One activity is designated as 'pretransfer' editing and involves the hydrolysis of activated Val-AMP. The other activity is designated 'posttransfer' editing and involves deacylation of mischarged Val-tRNA(Ile). The sequence is that of Isoleucine--tRNA ligase from Nostoc sp. (strain PCC 7120 / SAG 25.82 / UTEX 2576).